Here is a 368-residue protein sequence, read N- to C-terminus: Probable deoxyhypusine synthase (368 aa).

NAD(+)-binding positions include 100 to 104, 126 to 128, Glu-132, and Asp-233; these read SNLVS and TAG. 131 to 132 is a spermidine binding site; the sequence is EE. Asp-238 contacts spermidine. Residue Gly-278 participates in NAD(+) binding. His-283 contacts spermidine. 303-304 serves as a coordination point for NAD(+); it reads TA. Spermidine is bound by residues 309–311 and 318–324; these read GSD and EAISWGK. Residue Lys-324 is the Nucleophile of the active site. Residue 337–338 participates in NAD(+) binding; the sequence is EA.

It belongs to the deoxyhypusine synthase family. Requires NAD(+) as cofactor.

It carries out the reaction [eIF5A protein]-L-lysine + spermidine = [eIF5A protein]-deoxyhypusine + propane-1,3-diamine. It participates in protein modification; eIF5A hypusination. Catalyzes the NAD-dependent oxidative cleavage of spermidine and the subsequent transfer of the butylamine moiety of spermidine to the epsilon-amino group of a specific lysine residue of the eIF-5A precursor protein to form the intermediate deoxyhypusine residue. This is Probable deoxyhypusine synthase from Drosophila melanogaster (Fruit fly).